A 205-amino-acid polypeptide reads, in one-letter code: Ras-related protein Rab-1A (205 aa).

At Ser-2 the chain carries N-acetylserine. 8 residues coordinate GTP: Ser-20, Gly-21, Gly-23, Lys-24, Ser-25, Cys-26, Glu-38, and Thr-43. Residue Ser-25 coordinates Mg(2+). A Switch 1 motif is present at residues 34-48; that stretch reads DTYTESYISTIGVDF. Thr-43 is a binding site for Mg(2+). Glycyl lysine isopeptide (Lys-Gly) (interchain with G-Cter in ubiquitin) cross-links involve residues Lys-49 and Lys-61. Position 66 (Asp-66) interacts with Mg(2+). The short motif at 66 to 83 is the Switch 2 element; the sequence is DTAGQERFRTITSSYYRG. GTP contacts are provided by Gly-69, Asn-124, Lys-125, Asp-127, Ala-155, and Lys-156. Positions 178–205 are disordered; sequence PGATAGGAEKSNVKIQSTPVKQSGGGCC. Ser-194 is modified (phosphoserine). S-geranylgeranyl cysteine attachment occurs at residues Cys-204 and Cys-205.

It belongs to the small GTPase superfamily. Rab family. May interact with YIPF5. Interacts with C9orf72; the interaction mediates recruitment of RAB1A to the ATG1/ULK1 kinase complex. Interacts with GDI1; this promotes dissociation from membranes. Mg(2+) is required as a cofactor. Phosphorylated by CDK1 kinase during mitosis. Post-translationally, ubiquitinated via 'Lys-11'-linked ubiquitination on Lys-49 and Lys-61; impairing the recruitment of guanosine diphosphate (GDP) dissociation inhibitor 1/GDI1.

The protein resides in the golgi apparatus. The protein localises to the endoplasmic reticulum. It is found in the early endosome. It localises to the cytoplasm. Its subcellular location is the cytosol. The protein resides in the membrane. The protein localises to the melanosome. The catalysed reaction is GTP + H2O = GDP + phosphate + H(+). Its activity is regulated as follows. Regulated by guanine nucleotide exchange factors (GEFs) which promote the exchange of bound GDP for free GTP. Regulated by GTPase activating proteins (GAPs) which increase the GTP hydrolysis activity. Inhibited by GDP dissociation inhibitors (GDIs). Its function is as follows. The small GTPases Rab are key regulators of intracellular membrane trafficking, from the formation of transport vesicles to their fusion with membranes. Rabs cycle between an inactive GDP-bound form and an active GTP-bound form that is able to recruit to membranes different sets of downstream effectors directly responsible for vesicle formation, movement, tethering and fusion. RAB1A regulates vesicular protein transport from the endoplasmic reticulum (ER) to the Golgi compartment and on to the cell surface, and plays a role in IL-8 and growth hormone secretion. Required to modulate the compacted morphology of the Golgi. Regulates the level of CASR present at the cell membrane. Plays a role in cell adhesion and cell migration, via its role in protein trafficking. Plays a role in autophagosome assembly and cellular defense reactions against pathogenic bacteria. Plays a role in microtubule-dependent protein transport by early endosomes and in anterograde melanosome transport. The polypeptide is Ras-related protein Rab-1A (RAB1A) (Canis lupus familiaris (Dog)).